The sequence spans 366 residues: Alanine racemase (366 aa).

Catalysis depends on K40, which acts as the Proton acceptor; specific for D-alanine. The residue at position 40 (K40) is an N6-(pyridoxal phosphate)lysine. Substrate is bound at residue R136. Y263 serves as the catalytic Proton acceptor; specific for L-alanine. Substrate is bound at residue M310.

The protein belongs to the alanine racemase family. Requires pyridoxal 5'-phosphate as cofactor.

It catalyses the reaction L-alanine = D-alanine. Its pathway is amino-acid biosynthesis; D-alanine biosynthesis; D-alanine from L-alanine: step 1/1. Catalyzes the interconversion of L-alanine and D-alanine. May also act on other amino acids. This Streptococcus equi subsp. equi (strain 4047) protein is Alanine racemase (alr).